Reading from the N-terminus, the 192-residue chain is tRNA (pseudouridine(54)-N(1))-methyltransferase (192 aa).

S-adenosyl-L-methionine is bound by residues Leu114 and Gly138.

The protein belongs to the methyltransferase superfamily. TrmY family. In terms of assembly, homodimer.

It is found in the cytoplasm. It carries out the reaction pseudouridine(54) in tRNA + S-adenosyl-L-methionine = N(1)-methylpseudouridine(54) in tRNA + S-adenosyl-L-homocysteine + H(+). Specifically catalyzes the N1-methylation of pseudouridine at position 54 (Psi54) in tRNAs. This Aeropyrum pernix (strain ATCC 700893 / DSM 11879 / JCM 9820 / NBRC 100138 / K1) protein is tRNA (pseudouridine(54)-N(1))-methyltransferase.